The sequence spans 294 residues: Aquaporin NIP2-2 (294 aa).

Helical transmembrane passes span 54–74 and 88–108; these read VISE…AASI and SVAG…ISGA. The NPA 1 signature appears at 111–113; the sequence is NPA. Transmembrane regions (helical) follow at residues 129–151, 169–189, and 197–217; these read VPFY…KAVL, ALLI…AVAT, and LAGL…GPVS. Residues 222–224 carry the NPA 2 motif; sequence NPA. Residues 235-255 form a helical membrane-spanning segment; it reads VFTGLWIYFLGPVIGTLSGAW.

Belongs to the MIP/aquaporin (TC 1.A.8) family. NIP (TC 1.A.8.12) subfamily.

It is found in the membrane. Functionally, aquaporins facilitate the transport of water and small neutral solutes across cell membranes. This chain is Aquaporin NIP2-2 (NIP2-2), found in Zea mays (Maize).